The following is a 110-amino-acid chain: Late cornified envelope-like proline-rich protein 1 (110 aa).

The tract at residues 1-24 (MSSDDKNKPGEPKNEPKQCDPGCE) is disordered.

The protein belongs to the cornifin (SPRR) family.

The sequence is that of Late cornified envelope-like proline-rich protein 1 (LELP1) from Bos taurus (Bovine).